The following is a 324-amino-acid chain: Probable UDP-sugar transporter protein SLC35A4 (324 aa).

Topologically, residues 1–18 (MSVEDGGMPGLSRPRQAR) are cytoplasmic. Residues 19-39 (WTLMLLLSTAMYGAHAPLLAL) form a helical membrane-spanning segment. Residues 40–52 (CHVDGRVPFRPSS) lie on the Lumenal side of the membrane. Residues 53–73 (AVLLTELTKLLLCAFSLLVGW) traverse the membrane as a helical segment. At 74-85 (QAWPQGAPPWRQ) the chain is on the cytoplasmic side. Residues 86–106 (AAPFALSALLYGANNNLVIYL) form a helical membrane-spanning segment. At 107-142 (QRYMDPSTYQVLSNLKIGSTAVLYCLCLRHRLSVRQ) the chain is on the lumenal side. A helical membrane pass occupies residues 143–163 (GLALLLLMAAGACYAAGGLQV). Residues 164–180 (PGNTLPRPPPAAAASPM) are Cytoplasmic-facing. The chain crosses the membrane as a helical span at residues 181–201 (PLHITPLGLLLLILYCLISGL). Over 202–214 (SSVYTELLMKRQQ) the chain is Lumenal. Residues 215–235 (LPLALQNLFLYTFGVLLNLGL) form a helical membrane-spanning segment. At 236-250 (HAGGGPGPGLLEGFS) the chain is on the cytoplasmic side. A helical transmembrane segment spans residues 251–271 (GWAALVVLSQALNGLLMSVVM). The Lumenal segment spans residues 272–275 (KHGS). A helical membrane pass occupies residues 276–298 (SITRLFVVSCSLVVNAVLSAVLL). Residues 299–324 (RLQLTAAFFLATLLIGLAMRLYYGSR) lie on the Cytoplasmic side of the membrane.

It belongs to the nucleotide-sugar transporter family. SLC35A subfamily. In terms of assembly, found in a complex with SLC35A2 and SLC35A3.

The protein localises to the golgi apparatus membrane. It catalyses the reaction CDP-L-ribitol(in) + CDP(out) = CDP-L-ribitol(out) + CDP(in). In terms of biological role, mediates the transport of CDP-ribitol. Does not exhibit CMP-sialic acid, UDP-galactose and UDP-N-acetylglucosamine transport activity. The polypeptide is Probable UDP-sugar transporter protein SLC35A4 (Pongo abelii (Sumatran orangutan)).